The following is a 1155-amino-acid chain: DNA-directed RNA polymerase subunit beta (1155 aa).

Belongs to the RNA polymerase beta chain family. As to quaternary structure, the RNAP catalytic core consists of 2 alpha, 1 beta, 1 beta' and 1 omega subunit. When a sigma factor is associated with the core the holoenzyme is formed, which can initiate transcription.

The enzyme catalyses RNA(n) + a ribonucleoside 5'-triphosphate = RNA(n+1) + diphosphate. DNA-dependent RNA polymerase catalyzes the transcription of DNA into RNA using the four ribonucleoside triphosphates as substrates. This is DNA-directed RNA polymerase subunit beta from Borreliella burgdorferi (strain ZS7) (Borrelia burgdorferi).